The following is an 886-amino-acid chain: Methanogenesis regulatory histidine kinase FilI (886 aa).

Helical transmembrane passes span 7-27 (ILAFTGGMILVLALICSTFMC) and 270-290 (VVGIFLASLLFGGLILLFLEL). In terms of domain architecture, HAMP spans 290-344 (LSILMPLATITSSVEAIREQEKGQGSRIPTVGPAELATLAESINEMLDHLESYNQ). The PAS domain occupies 349–419 (SEKRFRTIVD…EKDAGVLSGE (71 aa)). One can recognise a PAC domain in the interval 421 to 473 (FVGEVSAHTRAGSSMTFHAVKVPLRDDRGQVTGICGIARDITDIKEAGVELLK). One can recognise a Histidine kinase domain in the interval 674-886 (TVSHDLRSPL…TCVLFTLPTP (213 aa)). The residue at position 677 (His677) is a Phosphohistidine; by autocatalysis.

Post-translationally, autophosphorylated.

It localises to the cell membrane. The catalysed reaction is ATP + protein L-histidine = ADP + protein N-phospho-L-histidine.. Functionally, member of the two-component regulatory system FilI/FilRs, which is involved in the regulation of methanogenesis. Autophosphorylates and specifically transfers the phosphoryl group to both FilR1 and FilR2. Its function is as follows. Could also catalyze the synthesis of the quorum sensing (QS) signal molecules carboxyl-acyl homoserine lactones (AHLs), which regulate the transition of the cellular morphology from short cells to filaments and of the carbon metabolic flux from biomass formation to methane production. The protein is Methanogenesis regulatory histidine kinase FilI of Methanothrix harundinacea (strain 6Ac) (Methanosaeta harundinacea).